Consider the following 377-residue polypeptide: MAKRDYYEVLGVSKDASKDEIKKAYRKLSKKYHPDINQEEGAEEKFKEISEAYEVLSDENKRANYDQFGHDGPQGGFGGQGFGGGQDFGGFGGGFEDIFSSFFGGGAQRDPNVPRKGDDLQYTMTVTFEEAAFGTEKEISIRKQVKCETCDGSGAKPGSKKKTCHYCNGSGHVSVEQNTILGRVRTEKVCPVCNGTGEEIEEPCPTCHGKGTETKNVKIKVKVPEGVDNDQQIRLAGEGAPGHNGGPQGDLYVVFRVEPSDTFEREGDDIFYNLNVSFPQAALGDEIKVPTLKGHVMLSVPEGTQNGKQFRMKEKGIKNVHGYGYGDLFININVVTPTKLNDKQKSIMREFAEVSGEEITEQPTNFKERARRFFKGE.

One can recognise a J domain in the interval 5–69; that stretch reads DYYEVLGVSK…NKRANYDQFG (65 aa). The CR-type zinc finger occupies 134-216; the sequence is GTEKEISIRK…CHGKGTETKN (83 aa). Cysteine 147, cysteine 150, cysteine 164, cysteine 167, cysteine 190, cysteine 193, cysteine 204, and cysteine 207 together coordinate Zn(2+). CXXCXGXG motif repeat units follow at residues 147 to 154, 164 to 171, 190 to 197, and 204 to 211; these read CETCDGSG, CHYCNGSG, CPVCNGTG, and CPTCHGKG.

This sequence belongs to the DnaJ family. In terms of assembly, homodimer. It depends on Zn(2+) as a cofactor.

Its subcellular location is the cytoplasm. Participates actively in the response to hyperosmotic and heat shock by preventing the aggregation of stress-denatured proteins and by disaggregating proteins, also in an autonomous, DnaK-independent fashion. Unfolded proteins bind initially to DnaJ; upon interaction with the DnaJ-bound protein, DnaK hydrolyzes its bound ATP, resulting in the formation of a stable complex. GrpE releases ADP from DnaK; ATP binding to DnaK triggers the release of the substrate protein, thus completing the reaction cycle. Several rounds of ATP-dependent interactions between DnaJ, DnaK and GrpE are required for fully efficient folding. Also involved, together with DnaK and GrpE, in the DNA replication of plasmids through activation of initiation proteins. This is Chaperone protein DnaJ from Staphylococcus carnosus (strain TM300).